Here is a 3838-residue protein sequence, read N- to C-terminus: Replicase polyprotein 1ab (3838 aa).

A C4-type; atypical zinc finger spans residues 8–28; it reads CMCTPAARVFWNAGQVFCTRC. The Peptidase C31 domain maps to 69-180; the sequence is ECTPSGCCWL…QPFCPFEEAH (112 aa). The interval 69-182 is PCP1-alpha; that stretch reads ECTPSGCCWL…FCPFEEAHSD (114 aa). Active-site for Nsp1-alpha papain-like cysteine proteinase activity residues include Cys76 and His146. The important for host EIF2AK2 inhibition stretch occupies residues 203–204; it reads MM. Residues 269–384 form a PCP1-beta region; that stretch reads PNVFDGKCWL…IFRFGAHKWY (116 aa). One can recognise a Peptidase C32 domain in the interval 269–385; the sequence is PNVFDGKCWL…FRFGAHKWYG (117 aa). Active-site for Nsp1-beta papain-like cysteine proteinase activity residues include Cys276 and His345. Residues 418–505 form an OTU-like region; sequence ITTYSPPTDG…GVHWEVEVRS (88 aa). Positions 420–527 constitute a Peptidase C33 domain; it reads TYSPPTDGSC…VGVCSEGCVA (108 aa). Active-site for Nsp2 cysteine proteinase activity residues include Cys429 and His498. Disordered regions lie at residues 728-758 and 1027-1064; these read AIGSAQSSSDSKRENMHNSREDEPLDLSHPA and SVTPPPKSAGLVLDQTVPPPTDIQQEDATPSDGLSHAS. Residues 737–749 show a composition bias toward basic and acidic residues; the sequence is DSKRENMHNSRED. Helical transmembrane passes span 1094–1114, 1117–1137, 1162–1182, 1211–1231, and 1235–1255; these read LMTWVFEVYSHLPAFILTLFS, GSMAPGDWLFAGVVLLALLLC, GVFGSWMAFAVFLFSTPSNPV, GLVVGPSGLLCVILGKLLGGS, and WHVILRLCMLTDLALSLVYVV. The tract at residues 1132 to 1255 is HD1; the sequence is LALLLCRSYP…DLALSLVYVV (124 aa). A WCCH region spans residues 1310–1334; sequence TGWRGCWRGESPIHQPHQKPIAYAN. A run of 4 helical transmembrane segments spans residues 1450 to 1470, 1526 to 1546, 1556 to 1576, and 1592 to 1612; these read TLAVAQVSVWTLVHFILGLWF, EVGIFILVLVSLTALAHRLAL, AFCAYAWPMSSWLICFFPILL, and FLVFCMPAAGILSLGITGLLW. An HD2 region spans residues 1451 to 1612; that stretch reads LAVAQVSVWT…LSLGITGLLW (162 aa). Residues 1677 to 1879 form the Peptidase S32 domain; sequence GAFRTHKPCL…SLLASVPVME (203 aa). Residues His1715, Asp1740, and Ser1793 each act as charge relay system; for 3C-like serine proteinase activity in the active site. The next 5 helical transmembrane spans lie at 1875-1895, 1916-1936, 1960-1980, 2003-2023, and 2029-2048; these read VPVMEGGLSTVQLLCVFFLLW, ILPAVLVRAVFSFALFILAWA, LAFYALGGVVGLAAEIGAFAG, SYVPIIIIGGLHALGVILWLF, and HNMLVGDGSFSSAFFLRYFA. The HD3 stretch occupies residues 1902-2023; it reads WTPIVAVGFF…HALGVILWLF (122 aa). A NiRAN domain is found at 2364 to 2527; sequence IISQLQGLTT…LPYKLYPVRG (164 aa). Residues 2765–2899 form the RdRp catalytic domain; sequence AGRCLEADLA…LYAERPTFPN (135 aa). The 64-residue stretch at 3021–3084 folds into the AV ZBD domain; that stretch reads GKKFRHCGIC…SPVGAGRSPL (64 aa). Residues Cys3027, Cys3030, Cys3040, Cys3045, His3048, His3050, His3052, His3054, Cys3061, His3063, Cys3070, and Cys3073 each coordinate Zn(2+). Positions 3134-3293 constitute a (+)RNA virus helicase ATP-binding domain; sequence DLPDGDYQVV…VFDQMPQKQL (160 aa). 3168–3175 contributes to the ATP binding site; it reads VGPPGSGK. In terms of domain architecture, (+)RNA virus helicase C-terminal spans 3294 to 3423; sequence TTIYRFGPNI…FSRGDDLVVL (130 aa). An AV-Nsp11N/CoV-Nsp15M domain is found at 3462–3559; sequence EGSCMPLPQV…LTLYIRGEPQ (98 aa). The NendoU domain maps to 3561–3683; sequence LPETLVSTGR…MVWKGATAYF (123 aa). Active-site residues include His3592, His3607, and Lys3636.

This sequence belongs to the arteriviridae polyprotein family. In terms of assembly, nsp1-alpha papain-like: Interacts with host RNF31. As to quaternary structure, interacts with host EIF2AK2; this interaction occurs in host stress granules and leads to EIF2AK2 inhibition. Interacts with host G3BP1; this interaction probably plays a role in Nsp1-beta-mediated inhibition of host EIF2AK2. Interacts with host DDX18; this interaction redistributes host DDX18 to the cytoplasm. In terms of assembly, interacts with host IFITM1. As to quaternary structure, interacts with host DDX5. Interacts with host OTULIN. In terms of assembly, interacts with host LGALS3. Specific enzymatic cleavages in vivo by its own proteases yield mature proteins. Nsp1 is autocleaved into two subunits, Nsp1-alpha and Nsp1-beta. There are two alternative pathways for processing. Either nsp4-5 is cleaved, which represents the major pathway or the nsp5-6 and nsp6-7 are processed, which represents the minor pathway. The major pathway occurs when nsp2 acts as a cofactor for nsp4.

The protein resides in the host nucleus. It is found in the host cytoplasm. Its subcellular location is the host membrane. The protein localises to the host endoplasmic reticulum. It localises to the host perinuclear region. The enzyme catalyses RNA(n) + a ribonucleoside 5'-triphosphate = RNA(n+1) + diphosphate. The catalysed reaction is ATP + H2O = ADP + phosphate + H(+). It catalyses the reaction Thiol-dependent hydrolysis of ester, thioester, amide, peptide and isopeptide bonds formed by the C-terminal Gly of ubiquitin (a 76-residue protein attached to proteins as an intracellular targeting signal).. It carries out the reaction uridylyl-uridylyl-ribonucleotide-RNA = a 3'-end uridylyl-2',3'-cyclophospho-uridine-RNA + a 5'-end dephospho-ribonucleoside-RNA. Its function is as follows. Contains the activities necessary for the transcription of negative stranded RNA, leader RNA, subgenomic mRNAs and progeny virion RNA as well as proteinases responsible for the cleavage of the polyprotein into functional products. Inhibits host IFN-beta production. Plays a role in the degradation of the host transcriptional activator CREBBP protein. The degradation of host CREBBP which is a key component of the IFN enhanceosome is likely responsible for the inhibition of interferon mediated by Nsp1-alpha. Also participates in the inhibition of host NF-kappa-B activation by counteracting LUBAC-dependent induction of NF-kappa-B. Reduces host NEMO ubiquitination by blocking the interaction between the two LUBAC complex components RNF31 and SHARPIN. Functionally, plays a role in blocking host mRNA nuclear export to the cytoplasm and subversion of host protein synthesis. Additionally, inhibits the interferon-activated JAK/STAT signal transduction by mediating the ubiquitination and subsequent proteasomal degradation of host KPNA1. Repurposes the host antiviral stress granules into a proviral platform to counteract the EIF2AK2/PKR restriction, thereby regulating the host inflammatory response. In terms of biological role, multifunctional protein that acts as a viral protease and as a viral antagonist of host immune response. Cleaves the nsp2/nsp3 site in the viral polyprotein. Displays deubiquitinating activity that cleaves both ubiquitinated and ISGylated products and therefore inhibits ubiquitin and ISG15-dependent host innate immunity. Also deubiquinates host NFKBIA, thereby interfering with NFKBIA degradation and impairing subsequent NF-kappa-B activation. Its function is as follows. Plays a role in the inhibition of the immune response by interacting with host IFITM1. This interaction leads to the proteasomal degradation of the IFN-induced antiviral protein IFITM1. Cleaves the majority of cleavage sites present in the C-terminus of the polyprotein. Triggers host apoptosis through caspase-3, -8, and -9 activations. Subverts host innate immune responses through its protease activity. Targets the NF-kappa-B essential modulator NEMO and mediates its cleavage. Blocks host interferon beta induction and downstream signaling by cleaving mitochondrial MAVS, dislodging it from the mitochondria. Impairs host defense by cleaving host mRNA-decapping enzyme DCP1A to attenuate its antiviral activity. Functionally, plays a role in the initial induction of autophagosomes from host endoplasmic reticulum. In terms of biological role, plays a role in the inhibition of host STAT3 signaling pathway by inducing the degradation of STAT3. Its function is as follows. Responsible for replication and transcription of the viral RNA genome. Displays RNA and DNA duplex-unwinding activities with 5' to 3' polarity. Functionally, plays a role in viral transcription/replication and prevents the simultaneous activation of host cell dsRNA sensors, such as MDA5/IFIH1, OAS, PKR and NLRP3 inflammasome. Acts by degrading the 5'-polyuridines generated during replication of the poly(A) region of viral genomic and subgenomic RNAs. Catalyzes a two-step reaction in which a 2'3'-cyclic phosphate (2'3'-cP) is first generated by 2'-O transesterification, which is then hydrolyzed to a 3'-phosphate (3'-P). If not degraded, poly(U) RNA would hybridize with poly(A) RNA tails and activate host dsRNA sensors. Also plays a role in the inhibition of host type I interferon production by recruiting host OTULIN to promote removal of linear ubiquitination targeting host NEMO. This chain is Replicase polyprotein 1ab, found in Sus scrofa (Pig).